We begin with the raw amino-acid sequence, 101 residues long: CRISPR-associated endoribonuclease Cas2 (101 aa).

Residue Asp-8 coordinates Mg(2+).

This sequence belongs to the CRISPR-associated endoribonuclease Cas2 protein family. Homodimer, forms a heterotetramer with a Cas1 homodimer. It depends on Mg(2+) as a cofactor.

CRISPR (clustered regularly interspaced short palindromic repeat), is an adaptive immune system that provides protection against mobile genetic elements (viruses, transposable elements and conjugative plasmids). CRISPR clusters contain sequences complementary to antecedent mobile elements and target invading nucleic acids. CRISPR clusters are transcribed and processed into CRISPR RNA (crRNA). Functions as a ssRNA-specific endoribonuclease. Involved in the integration of spacer DNA into the CRISPR cassette. This Treponema denticola (strain ATCC 35405 / DSM 14222 / CIP 103919 / JCM 8153 / KCTC 15104) protein is CRISPR-associated endoribonuclease Cas2.